A 264-amino-acid chain; its full sequence is Occludin/ELL domain-containing protein 1 (264 aa).

Residues 1-10 (MHNPDGSASP) are compositionally biased toward polar residues. A disordered region spans residues 1–112 (MHNPDGSASP…QPGPHKAKTK (112 aa)). Residues 96–105 (PRPPCQPQPG) are compositionally biased toward pro residues. The OCEL domain occupies 147-257 (PDYELKYPPV…QIQKFDDQGD (111 aa)).

This sequence belongs to the ELL/occludin family.

The protein is Occludin/ELL domain-containing protein 1 (OCEL1) of Homo sapiens (Human).